Reading from the N-terminus, the 440-residue chain is Origin recognition complex subunit 4 (440 aa).

64–71 (GPKGSGKS) lines the ATP pocket.

This sequence belongs to the ORC4 family. In terms of assembly, ORC is composed of six subunits.

Its subcellular location is the nucleus. Component of the origin recognition complex (ORC) that binds origins of replication. DNA-binding is ATP-dependent, however specific DNA sequences that define origins of replication have not been identified so far. ORC is required to assemble the pre-replication complex necessary to initiate DNA replication. The sequence is that of Origin recognition complex subunit 4 (orcD) from Dictyostelium discoideum (Social amoeba).